We begin with the raw amino-acid sequence, 1364 residues long: Trifunctional purine biosynthetic protein adenosine-3 (1364 aa).

An ATP-grasp domain is found at lysine 114 to serine 321. Residue isoleucine 140–serine 202 coordinates ATP. 2 residues coordinate Mn(2+): glutamate 291 and asparagine 293. Positions alanine 435–proline 1154 are AIRS. The interval arginine 1155–glutamine 1364 is GART. Glycine 1166–asparagine 1168 serves as a coordination point for N(1)-(5-phospho-beta-D-ribosyl)glycinamide. Residues arginine 1221, methionine 1246–leucine 1249, and asparagine 1263 contribute to the (6R)-10-formyltetrahydrofolate site. Histidine 1265 functions as the Proton donor in the catalytic mechanism. Aspartate 1297 to aspartate 1301 lines the (6R)-10-formyltetrahydrofolate pocket. Residue histidine 1327–glutamate 1330 participates in N(1)-(5-phospho-beta-D-ribosyl)glycinamide binding.

This sequence in the N-terminal section; belongs to the GARS family. The protein in the central section; belongs to the AIR synthase family. In the C-terminal section; belongs to the GART family.

The enzyme catalyses 5-phospho-beta-D-ribosylamine + glycine + ATP = N(1)-(5-phospho-beta-D-ribosyl)glycinamide + ADP + phosphate + H(+). It carries out the reaction 2-formamido-N(1)-(5-O-phospho-beta-D-ribosyl)acetamidine + ATP = 5-amino-1-(5-phospho-beta-D-ribosyl)imidazole + ADP + phosphate + H(+). It catalyses the reaction N(1)-(5-phospho-beta-D-ribosyl)glycinamide + (6R)-10-formyltetrahydrofolate = N(2)-formyl-N(1)-(5-phospho-beta-D-ribosyl)glycinamide + (6S)-5,6,7,8-tetrahydrofolate + H(+). It functions in the pathway purine metabolism; IMP biosynthesis via de novo pathway; 5-amino-1-(5-phospho-D-ribosyl)imidazole from N(2)-formyl-N(1)-(5-phospho-D-ribosyl)glycinamide: step 2/2. It participates in purine metabolism; IMP biosynthesis via de novo pathway; N(1)-(5-phospho-D-ribosyl)glycinamide from 5-phospho-alpha-D-ribose 1-diphosphate: step 2/2. Its pathway is purine metabolism; IMP biosynthesis via de novo pathway; N(2)-formyl-N(1)-(5-phospho-D-ribosyl)glycinamide from N(1)-(5-phospho-D-ribosyl)glycinamide (10-formyl THF route): step 1/1. Its function is as follows. Trifunctional enzyme required for de novo purine biosynthesis. This is Trifunctional purine biosynthetic protein adenosine-3 (ade3) from Drosophila pseudoobscura pseudoobscura (Fruit fly).